Here is a 618-residue protein sequence, read N- to C-terminus: 2-succinyl-5-enolpyruvyl-6-hydroxy-3-cyclohexene-1-carboxylate synthase (618 aa).

Residues 192-215 form a disordered region; that stretch reads DPVAERGRDGPYVDVTPGSPEPGD.

Belongs to the TPP enzyme family. MenD subfamily. In terms of assembly, homodimer. The cofactor is Mg(2+). It depends on Mn(2+) as a cofactor. Thiamine diphosphate serves as cofactor.

It carries out the reaction isochorismate + 2-oxoglutarate + H(+) = 5-enolpyruvoyl-6-hydroxy-2-succinyl-cyclohex-3-ene-1-carboxylate + CO2. It participates in quinol/quinone metabolism; 1,4-dihydroxy-2-naphthoate biosynthesis; 1,4-dihydroxy-2-naphthoate from chorismate: step 2/7. Its pathway is quinol/quinone metabolism; menaquinone biosynthesis. In terms of biological role, catalyzes the thiamine diphosphate-dependent decarboxylation of 2-oxoglutarate and the subsequent addition of the resulting succinic semialdehyde-thiamine pyrophosphate anion to isochorismate to yield 2-succinyl-5-enolpyruvyl-6-hydroxy-3-cyclohexene-1-carboxylate (SEPHCHC). The chain is 2-succinyl-5-enolpyruvyl-6-hydroxy-3-cyclohexene-1-carboxylate synthase from Halorubrum lacusprofundi (strain ATCC 49239 / DSM 5036 / JCM 8891 / ACAM 34).